A 108-amino-acid polypeptide reads, in one-letter code: MAEEFVQQRLANNKVTIFVKFTCPFCRNALDILNKFSFKRGAYEIVDIKEFKPENELRDYFEQITGGRTVPRIFFGKTSIGGYSDMLEIDNMDALGDILSSIGVLRTC.

A Glutaredoxin domain is found at 3-106 (EEFVQQRLAN…DILSSIGVLR (104 aa)). A disulfide bond links cysteine 23 and cysteine 26.

It belongs to the glutaredoxin family.

The protein resides in the virion. Has thioltransferase and dehydroascorbate reductase activities. The protein is Glutaredoxin-1 (OPG075) of Camelpox virus (strain M-96).